The sequence spans 265 residues: Homeobox protein engrailed-2-B (265 aa).

Basic and acidic residues-rich tracts occupy residues 1 to 12 and 102 to 115; these read MEENEQNNREVE and GEKK…ETLK. 3 disordered regions span residues 1–38, 60–138, and 156–182; these read MEEN…QPHH, INHQ…SSKA, and DRPS…PRTA. Positions 122 to 136 are enriched in low complexity; that stretch reads DHSLSSDSDSSQASS. The homeobox DNA-binding region spans 176-235; that stretch reads DKRPRTAFTAEQLQRLKAEFQTNRYLTEQRRQSLAQELGLNESQIKIWFQNKRAKIKKST.

The protein belongs to the engrailed homeobox family.

The protein resides in the nucleus. This is Homeobox protein engrailed-2-B (en2-b) from Xenopus laevis (African clawed frog).